Consider the following 174-residue polypeptide: UPF0200 protein PAE1629 (174 aa).

Residue 9-16 (GLPGSGKT) participates in ATP binding.

Belongs to the UPF0200 family.

This chain is UPF0200 protein PAE1629, found in Pyrobaculum aerophilum (strain ATCC 51768 / DSM 7523 / JCM 9630 / CIP 104966 / NBRC 100827 / IM2).